We begin with the raw amino-acid sequence, 232 residues long: 5'-methylthioadenosine/S-adenosylhomocysteine nucleosidase (232 aa).

The active-site Proton acceptor is glutamate 12. Residues glycine 78, isoleucine 152, and 173-174 (ME) contribute to the substrate site. The active-site Proton donor is the aspartate 197.

The protein belongs to the PNP/UDP phosphorylase family. MtnN subfamily. As to quaternary structure, homodimer.

The enzyme catalyses S-adenosyl-L-homocysteine + H2O = S-(5-deoxy-D-ribos-5-yl)-L-homocysteine + adenine. It catalyses the reaction S-methyl-5'-thioadenosine + H2O = 5-(methylsulfanyl)-D-ribose + adenine. It carries out the reaction 5'-deoxyadenosine + H2O = 5-deoxy-D-ribose + adenine. It functions in the pathway amino-acid biosynthesis; L-methionine biosynthesis via salvage pathway; S-methyl-5-thio-alpha-D-ribose 1-phosphate from S-methyl-5'-thioadenosine (hydrolase route): step 1/2. Catalyzes the irreversible cleavage of the glycosidic bond in both 5'-methylthioadenosine (MTA) and S-adenosylhomocysteine (SAH/AdoHcy) to adenine and the corresponding thioribose, 5'-methylthioribose and S-ribosylhomocysteine, respectively. Also cleaves 5'-deoxyadenosine, a toxic by-product of radical S-adenosylmethionine (SAM) enzymes, into 5-deoxyribose and adenine. Thus, is required for in vivo function of the radical SAM enzymes biotin synthase and lipoic acid synthase, that are inhibited by 5'-deoxyadenosine accumulation. This chain is 5'-methylthioadenosine/S-adenosylhomocysteine nucleosidase, found in Klebsiella pneumoniae (strain 342).